Consider the following 320-residue polypeptide: MISVNEKGLAIIDEMLDWEEDVKIESKVLENGATIIDCGVNVEGGYDAGMYLSRLCLADLAEISYTKVDLEGLAVPAIQIATDHPTIACMASQYAGWRIAVGDYFGMGSGPARGLGLKPKELYEEIGYKDEADAAVLVMESDKLPTEEIVEYIAKHCSVEPQNVFIAVAPTSSIAGSVQISARVVETGIHKLESIGYDINKIKSGFGVAPIAPIVGDDTKCMGSTNDCIIYCGETYYTVEDGNAEELEDFVKKAPSSTSRDFGKPFYTTFKEAGFDFFKVDAGMFAPAKITINDLKSKKSFTSGRINPGILLESFGIKNV.

It belongs to the MCH family.

The protein localises to the cytoplasm. The catalysed reaction is 5,10-methenyl-5,6,7,8-tetrahydromethanopterin + H2O = N(5)-formyl-5,6,7,8-tetrahydromethanopterin + H(+). In terms of biological role, catalyzes the hydrolysis of methenyl-H(4)MPT(+) to 5-formyl-H(4)MPT. The polypeptide is Methenyltetrahydromethanopterin cyclohydrolase (Methanococcoides burtonii (strain DSM 6242 / NBRC 107633 / OCM 468 / ACE-M)).